The chain runs to 2452 residues: Lovastatin diketide synthase lovF (2452 aa).

The Ketosynthase family 3 (KS3) domain occupies 10–381 (PAPIAVVGMG…GANAHAIVER (372 aa)). Active-site for beta-ketoacyl synthase activity residues include cysteine 173, histidine 308, and histidine 343. The malonyl-CoA:ACP transacylase (MAT) domain stretch occupies residues 496 to 790 (VFTGQGAQWF…PYLSCLSRGK (295 aa)). Catalysis depends on serine 555, which acts as the For malonyltransferase activity. The interval 861–998 (HDLIGLQEPL…GLVRVDMDQP (138 aa)) is N-terminal hotdog fold. The tract at residues 861–1166 (HDLIGLQEPL…LEGLVFQSLG (306 aa)) is dehydratase (DH) domain. The 311-residue stretch at 861-1171 (HDLIGLQEPL…FQSLGASLGT (311 aa)) folds into the PKS/mFAS DH domain. The active-site Proton acceptor; for dehydratase activity is the histidine 893. The tract at residues 997 to 1017 (QPASSLSNPQRADPRPWSRKT) is disordered. Residues 1012 to 1171 (PWSRKTAPQD…FQSLGASLGT (160 aa)) form a C-terminal hotdog fold region. The active-site Proton donor; for dehydratase activity is aspartate 1079. The interval 1343 to 1528 (ELVRLCCHKN…RDCDSDEFYM (186 aa)) is methyltransferase (CMet) domain. Positions 1745-2064 (GLLDSLYFRK…SGQHVGKIVV (320 aa)) are enoylreductase (ER) domain. Residues 2088 to 2260 (SYLVAGGLGG…AVTIDLGMVQ (173 aa)) form a ketoreductase (KR) domain region. In terms of domain architecture, Carrier spans 2373-2450 (ASIAVIMEAM…KVAEVVLQRY (78 aa)). Serine 2410 carries the post-translational modification O-(pantetheine 4'-phosphoryl)serine.

As to quaternary structure, interacts with LovD. The cofactor is pantetheine 4'-phosphate.

The enzyme catalyses holo-[2-methylbutanoate polyketide synthase] + 2 malonyl-CoA + S-adenosyl-L-methionine + 2 NADPH + 3 H(+) = (S)-2-methylbutanoyl-[2-methylbutanoate polyketide synthase] + S-adenosyl-L-homocysteine + 2 CO2 + 2 NADP(+) + 2 CoA + H2O. The protein operates within polyketide biosynthesis; lovastatin biosynthesis. Its function is as follows. Lovastatin diketide synthase; part of the gene cluster that mediates the biosynthesis of lovastatin (also known as mevinolin, mevacor or monacolin K), a hypolipidemic inhibitor of (3S)-hydroxymethylglutaryl-coenzyme A (HMG-CoA) reductase (HMGR). The first step in the biosynthesis of lovastatin is the production of dihydromonacolin L acid by the lovastatin nonaketide synthase lovB and the trans-acting enoyl reductase lovC via condensation of one acetyl-CoA unit and 8 malonyl-CoA units. Dihydromonacolin L acid is released from lovB by the thioesterase lovG. Next, dihydromonacolin L acid is oxidized by the dihydromonacolin L monooxygenase lovA twice to form monacolin J acid. The 2-methylbutyrate moiety of lovastatin is synthesized by the lovastatin diketide synthase lovF via condensation of one acetyl-CoA unit and one malonyl-CoA unit. Finally, the covalent attachment of this moiety to monacolin J acid is catalyzed by the transesterase lovD to yield lovastatin. LovD has broad substrate specificity and can also convert monacolin J to simvastatin using alpha-dimethylbutanoyl-S-methyl-3-mercaptopropionate (DMB-S-MMP) as the thioester acyl donor, and can also catalyze the reverse reaction and function as hydrolase in vitro. LovD has much higher activity with LovF-bound 2-methylbutanoate than with free diketide substrates. This Aspergillus terreus (strain NIH 2624 / FGSC A1156) protein is Lovastatin diketide synthase lovF.